A 156-amino-acid polypeptide reads, in one-letter code: Transcription elongation factor GreA (156 aa).

Residues 46–66 (AEYHAAREKQSFVEGRIKELE) are a coiled coil.

The protein belongs to the GreA/GreB family.

Its function is as follows. Necessary for efficient RNA polymerase transcription elongation past template-encoded arresting sites. The arresting sites in DNA have the property of trapping a certain fraction of elongating RNA polymerases that pass through, resulting in locked ternary complexes. Cleavage of the nascent transcript by cleavage factors such as GreA or GreB allows the resumption of elongation from the new 3'terminus. GreA releases sequences of 2 to 3 nucleotides. In Paracoccus denitrificans (strain Pd 1222), this protein is Transcription elongation factor GreA.